The sequence spans 320 residues: ATP-dependent 6-phosphofructokinase isozyme 1 (320 aa).

Residue Gly12 participates in ATP binding. ADP is bound by residues 22 to 26 and 55 to 60; these read RGVVR and RYSVSD. ATP-binding positions include 73–74 and 103–106; these read RF and GDGS. A Mg(2+)-binding site is contributed by Asp104. 126 to 128 contributes to the substrate binding site; the sequence is TID. Asp128 functions as the Proton acceptor in the catalytic mechanism. Arg155 is an ADP binding site. Residues Arg163 and 170 to 172 contribute to the substrate site; that span reads MGR. Residues 186–188, Lys212, and 214–216 each bind ADP; these read GCE and KKH. Substrate is bound by residues Glu223, Arg244, and 250-253; that span reads HIQR.

This sequence belongs to the phosphofructokinase type A (PFKA) family. ATP-dependent PFK group I subfamily. Prokaryotic clade 'B1' sub-subfamily. As to quaternary structure, homotetramer. It depends on Mg(2+) as a cofactor.

The protein resides in the cytoplasm. The enzyme catalyses beta-D-fructose 6-phosphate + ATP = beta-D-fructose 1,6-bisphosphate + ADP + H(+). It functions in the pathway carbohydrate degradation; glycolysis; D-glyceraldehyde 3-phosphate and glycerone phosphate from D-glucose: step 3/4. Its activity is regulated as follows. Allosterically activated by ADP and other diphosphonucleosides, and allosterically inhibited by phosphoenolpyruvate. Its function is as follows. Catalyzes the phosphorylation of D-fructose 6-phosphate to fructose 1,6-bisphosphate by ATP, the first committing step of glycolysis. The protein is ATP-dependent 6-phosphofructokinase isozyme 1 of Escherichia coli O6:H1 (strain CFT073 / ATCC 700928 / UPEC).